Here is a 94-residue protein sequence, read N- to C-terminus: Co-chaperonin GroES (94 aa).

The protein belongs to the GroES chaperonin family. Heptamer of 7 subunits arranged in a ring. Interacts with the chaperonin GroEL.

The protein localises to the cytoplasm. Functionally, together with the chaperonin GroEL, plays an essential role in assisting protein folding. The GroEL-GroES system forms a nano-cage that allows encapsulation of the non-native substrate proteins and provides a physical environment optimized to promote and accelerate protein folding. GroES binds to the apical surface of the GroEL ring, thereby capping the opening of the GroEL channel. In Exiguobacterium sp. (strain ATCC BAA-1283 / AT1b), this protein is Co-chaperonin GroES.